The following is a 172-amino-acid chain: MPLLDSFTVDHTRMNAPAVRVAKTMQTPKGDTITVFDLRFTAPNKDILSEKGIHTLEHLYAGFMRNHLNGDSVEIIDISPMGCRTGFYMSLIGTPSEQQVADAWLASMEDVLKVESQNKIPELNEYQCGTAAMHSLEEAQQIAKNILAAGVSVNKNDELALPESMLKELRVD.

The Fe cation site is built by His-54, His-58, and Cys-128.

Belongs to the LuxS family. Homodimer. Requires Fe cation as cofactor.

The catalysed reaction is S-(5-deoxy-D-ribos-5-yl)-L-homocysteine = (S)-4,5-dihydroxypentane-2,3-dione + L-homocysteine. Involved in the synthesis of autoinducer 2 (AI-2) which is secreted by bacteria and is used to communicate both the cell density and the metabolic potential of the environment. The regulation of gene expression in response to changes in cell density is called quorum sensing. Catalyzes the transformation of S-ribosylhomocysteine (RHC) to homocysteine (HC) and 4,5-dihydroxy-2,3-pentadione (DPD). The chain is S-ribosylhomocysteine lyase from Vibrio parahaemolyticus serotype O3:K6 (strain RIMD 2210633).